A 422-amino-acid chain; its full sequence is Tryptophan synthase beta chain (422 aa).

An N6-(pyridoxal phosphate)lysine modification is found at Lys-111.

This sequence belongs to the TrpB family. As to quaternary structure, tetramer of two alpha and two beta chains. Pyridoxal 5'-phosphate is required as a cofactor.

It carries out the reaction (1S,2R)-1-C-(indol-3-yl)glycerol 3-phosphate + L-serine = D-glyceraldehyde 3-phosphate + L-tryptophan + H2O. It participates in amino-acid biosynthesis; L-tryptophan biosynthesis; L-tryptophan from chorismate: step 5/5. The beta subunit is responsible for the synthesis of L-tryptophan from indole and L-serine. The chain is Tryptophan synthase beta chain from Pseudothermotoga lettingae (strain ATCC BAA-301 / DSM 14385 / NBRC 107922 / TMO) (Thermotoga lettingae).